The primary structure comprises 172 residues: 3-hydroxydecanoyl-[acyl-carrier-protein] dehydratase (172 aa).

His71 is a catalytic residue.

The protein belongs to the thioester dehydratase family. FabA subfamily. In terms of assembly, homodimer.

The protein resides in the cytoplasm. The catalysed reaction is a (3R)-hydroxyacyl-[ACP] = a (2E)-enoyl-[ACP] + H2O. It carries out the reaction (3R)-hydroxydecanoyl-[ACP] = (2E)-decenoyl-[ACP] + H2O. The enzyme catalyses (2E)-decenoyl-[ACP] = (3Z)-decenoyl-[ACP]. It participates in lipid metabolism; fatty acid biosynthesis. In terms of biological role, necessary for the introduction of cis unsaturation into fatty acids. Catalyzes the dehydration of (3R)-3-hydroxydecanoyl-ACP to E-(2)-decenoyl-ACP and then its isomerization to Z-(3)-decenoyl-ACP. Can catalyze the dehydratase reaction for beta-hydroxyacyl-ACPs with saturated chain lengths up to 16:0, being most active on intermediate chain length. This chain is 3-hydroxydecanoyl-[acyl-carrier-protein] dehydratase, found in Edwardsiella ictaluri (strain 93-146).